A 503-amino-acid polypeptide reads, in one-letter code: Nuclear respiratory factor 1 (503 aa).

The interval M1–G78 is dimerization. A disordered region spans residues S36–D57. S39, S44, S46, S47, and S52 each carry phosphoserine; by CK2. The short motif at G88–R116 is the Nuclear localization signal element. The DNA-binding element occupies T109 to T305. Residue K139 forms a Glycyl lysine isopeptide (Lys-Gly) (interchain with G-Cter in SUMO2) linkage. The interval V301 to A476 is required for transcriptional activation.

Belongs to the NRF1/Ewg family. In terms of assembly, homodimer. Binds DNA as a dimer. Interacts with PPRC1. In terms of processing, phosphorylation enhances DNA binding. In terms of tissue distribution, widely expressed in embryonic, fetal, and adult tissues.

Its subcellular location is the nucleus. Transcription factor that activates the expression of the EIF2S1 (EIF2-alpha) gene. Links the transcriptional modulation of key metabolic genes to cellular growth and development. Implicated in the control of nuclear genes required for respiration, heme biosynthesis, and mitochondrial DNA transcription and replication. The chain is Nuclear respiratory factor 1 (Nrf1) from Mus musculus (Mouse).